A 74-amino-acid polypeptide reads, in one-letter code: Conotoxin VxVIA (74 aa).

The N-terminal stretch at 1–22 is a signal peptide; the sequence is MKLTCVLIIAVLFLTAYQLATA. The propeptide occupies 23-47; sequence ASHAKGKQKHRALRPADKHFRFTKR. Cystine bridges form between Cys48–Cys62, Cys55–Cys66, and Cys61–Cys73.

In terms of tissue distribution, expressed by the venom duct.

Its subcellular location is the secreted. Functionally, when injected intracranially in mice, induces a series of symptoms such as quivering, climbing, scratching, barrel rolling and paralysis of limbs. Unexpectedly, no effect is observed on ionic currents when tested on locust DUM neuron. The protein is Conotoxin VxVIA of Conus vexillum (Flag cone).